Here is a 498-residue protein sequence, read N- to C-terminus: Trehalose-6-phosphate synthase (498 aa).

Arginine 28 serves as a coordination point for D-glucose 6-phosphate. A UDP-alpha-D-glucose-binding site is contributed by 48–49; that stretch reads GG. Residues tyrosine 106 and aspartate 160 each coordinate D-glucose 6-phosphate. UDP-alpha-D-glucose contacts are provided by arginine 302 and lysine 307. A D-glucose 6-phosphate-binding site is contributed by arginine 340. 405 to 409 provides a ligand contact to UDP-alpha-D-glucose; the sequence is LVAKE.

Belongs to the glycosyltransferase 20 family. Homotetramer.

The catalysed reaction is ADP-alpha-D-glucose + D-glucose 6-phosphate = alpha,alpha-trehalose 6-phosphate + ADP + H(+). It carries out the reaction CDP-alpha-D-glucose + D-glucose 6-phosphate = alpha,alpha-trehalose 6-phosphate + CDP + H(+). The enzyme catalyses GDP-alpha-D-glucose + D-glucose 6-phosphate = alpha,alpha-trehalose 6-phosphate + GDP + H(+). It catalyses the reaction TDP-alpha-D-glucose + D-glucose 6-phosphate = 5-methyl-UDP + alpha,alpha-trehalose 6-phosphate + H(+). The catalysed reaction is D-glucose 6-phosphate + UDP-alpha-D-glucose = alpha,alpha-trehalose 6-phosphate + UDP + H(+). It participates in glycan biosynthesis; trehalose biosynthesis. Its function is as follows. Probably involved in the osmoprotection via the biosynthesis of trehalose and in the production of glycogen and alpha-glucan via the TreS-Pep2 branch involved in the biosynthesis of maltose-1-phosphate (M1P). Catalyzes the transfer of glucose from UDP-glucose (UDP-Glc) to D-glucose 6-phosphate (Glc-6-P) to form trehalose-6-phosphate. Probably also able to use ADP-Glc, CDP-Glc, GDP-Glc and TDP-Glc as glucosyl donors. In Mycobacterium leprae (strain TN), this protein is Trehalose-6-phosphate synthase.